The sequence spans 222 residues: Orotate phosphoribosyltransferase (222 aa).

Lysine 29 contributes to the 5-phospho-alpha-D-ribose 1-diphosphate binding site. Orotate is bound at residue 37–38 (FF). 5-phospho-alpha-D-ribose 1-diphosphate is bound by residues 75–76 (YK), arginine 101, lysine 102, lysine 105, histidine 107, and 126–134 (DDVISAGTS). Serine 130 and arginine 158 together coordinate orotate.

Belongs to the purine/pyrimidine phosphoribosyltransferase family. PyrE subfamily. As to quaternary structure, homodimer. Requires Mg(2+) as cofactor.

It carries out the reaction orotidine 5'-phosphate + diphosphate = orotate + 5-phospho-alpha-D-ribose 1-diphosphate. It functions in the pathway pyrimidine metabolism; UMP biosynthesis via de novo pathway; UMP from orotate: step 1/2. Its function is as follows. Catalyzes the transfer of a ribosyl phosphate group from 5-phosphoribose 1-diphosphate to orotate, leading to the formation of orotidine monophosphate (OMP). The sequence is that of Orotate phosphoribosyltransferase from Polynucleobacter necessarius subsp. necessarius (strain STIR1).